The primary structure comprises 238 residues: MSAGREQFVRRMRASRSAGDAFDVVLQRGTELGFQFCAYRLTAPIPITRRRTFVWSNYPNACAASPVLDADRSGRGADTDAQACGVTADATQVFESMADGLWAETSDQGVRYGWALSVRDRWGAVGTLKFARGTREIVQEELDDIEPEMIWLAHLAHDTIGSLMRDETIPGEIARVSLVERQILLWTAEGKTVSEISSILQMSVRNINFHIQNVVGKLGATNKTHAAVKATLVGLIPV.

An HTH luxR-type domain is found at 169-234 (IPGEIARVSL…HAAVKATLVG (66 aa)). Positions 193 to 212 (VSEISSILQMSVRNINFHIQ) form a DNA-binding region, H-T-H motif.

Belongs to the autoinducer-regulated transcriptional regulatory protein family.

Represses thailandamide production. The polypeptide is Transcriptional repressor ThaA (Burkholderia thailandensis (strain ATCC 700388 / DSM 13276 / CCUG 48851 / CIP 106301 / E264)).